The primary structure comprises 554 residues: 3-(3-hydroxy-phenyl)propionate/3-hydroxycinnamic acid hydroxylase (554 aa).

FAD is bound by residues 17-46 (QVAI…VVEK) and 285-295 (FRIDRVLLAGD).

Belongs to the PheA/TfdB FAD monooxygenase family. Requires FAD as cofactor.

It catalyses the reaction 3-(3-hydroxyphenyl)propanoate + NADH + O2 + H(+) = 3-(2,3-dihydroxyphenyl)propanoate + NAD(+) + H2O. The enzyme catalyses (2E)-3-(3-hydroxyphenyl)prop-2-enoate + NADH + O2 + H(+) = (2E)-3-(2,3-dihydroxyphenyl)prop-2-enoate + NAD(+) + H2O. It participates in aromatic compound metabolism; 3-phenylpropanoate degradation. Its function is as follows. Catalyzes the insertion of one atom of molecular oxygen into position 2 of the phenyl ring of 3-(3-hydroxyphenyl)propionate (3-HPP) and hydroxycinnamic acid (3HCI). In Escherichia coli O8 (strain IAI1), this protein is 3-(3-hydroxy-phenyl)propionate/3-hydroxycinnamic acid hydroxylase.